Here is a 2216-residue protein sequence, read N- to C-terminus: Protein Ycf2 (2216 aa).

1567–1574 (GSIGTGRS) lines the ATP pocket.

The protein belongs to the Ycf2 family.

It is found in the plastid stroma. In terms of biological role, probable ATPase of unknown function. Its presence in a non-photosynthetic plant (Epifagus virginiana) and experiments in tobacco indicate that it has an essential function which is probably not related to photosynthesis. This Epifagus virginiana (Beechdrops) protein is Protein Ycf2.